Consider the following 230-residue polypeptide: Large ribosomal subunit protein uL1 (230 aa).

Belongs to the universal ribosomal protein uL1 family. In terms of assembly, part of the 50S ribosomal subunit.

Functionally, binds directly to 23S rRNA. The L1 stalk is quite mobile in the ribosome, and is involved in E site tRNA release. Its function is as follows. Protein L1 is also a translational repressor protein, it controls the translation of the L11 operon by binding to its mRNA. The protein is Large ribosomal subunit protein uL1 of Gluconobacter oxydans (strain 621H) (Gluconobacter suboxydans).